The following is a 151-amino-acid chain: Superoxide dismutase [Cu-Zn] 2 (151 aa).

The Cu cation site is built by histidine 44, histidine 46, and histidine 61. A disulfide bond links cysteine 55 and cysteine 144. Histidine 61, histidine 69, histidine 78, and aspartate 81 together coordinate Zn(2+). Histidine 118 is a binding site for Cu cation.

The protein belongs to the Cu-Zn superoxide dismutase family. In terms of assembly, homodimer. Cu cation serves as cofactor. Zn(2+) is required as a cofactor.

It is found in the cytoplasm. The catalysed reaction is 2 superoxide + 2 H(+) = H2O2 + O2. Its function is as follows. Destroys radicals which are normally produced within the cells and which are toxic to biological systems. This is Superoxide dismutase [Cu-Zn] 2 (SODCC.1) from Zea mays (Maize).